A 636-amino-acid polypeptide reads, in one-letter code: Translation factor GUF1 homolog, chloroplastic (636 aa).

The tr-type G domain maps to 31–212 (NLARNFSIIA…AIVTKIPPPQ (182 aa)). GTP is bound by residues 40 to 47 (AHIDHGKS), 105 to 109 (DTPGH), and 159 to 162 (NKID).

This sequence belongs to the TRAFAC class translation factor GTPase superfamily. Classic translation factor GTPase family. LepA subfamily.

Its subcellular location is the plastid. The protein resides in the chloroplast. The enzyme catalyses GTP + H2O = GDP + phosphate + H(+). Promotes chloroplast protein synthesis. May act as a fidelity factor of the translation reaction, by catalyzing a one-codon backward translocation of tRNAs on improperly translocated ribosomes. The protein is Translation factor GUF1 homolog, chloroplastic of Oryza sativa subsp. indica (Rice).